Here is a 359-residue protein sequence, read N- to C-terminus: MVDIIFHYPFLGAMGDHSKKKPGTAMCVGCGSQIHDQFILRVSPDLEWHAACLKCAECSQYLDETCTCFVRDGKTYCKRDYVRLFGIKCAQCQVGFSSSDLVMRARDSVYHIECFRCSVCSRQLLPGDEFSLREHELLCRADHGLLLERAAAGSPRSPGPLPGARGLHLPDAGSGRQPSLRTHVHKQAEKTTRVRTVLNEKQLHTLRTCYAANPRPDALMKEQLVEMTGLSPRVIRVWFQNKRCKDKKKSILMKQLQQQQHSDKASLQGLTGTPLVAGSPIRHENAVQGSAVEVQTYQPPWKALSEFALQSDLDQPAFQQLVSFSESGSLGNSSGSDVTSLSSQLPDTPNSMVPSPVET.

2 consecutive LIM zinc-binding domains span residues 25 to 86 (AMCV…RLFG) and 87 to 149 (IKCA…LLER). Positions 151 to 190 (AAGSPRSPGPLPGARGLHLPDAGSGRQPSLRTHVHKQAEK) are disordered. Residues S154 and S157 each carry the phosphoserine modification. The segment at residues 191-250 (TTRVRTVLNEKQLHTLRTCYAANPRPDALMKEQLVEMTGLSPRVIRVWFQNKRCKDKKKS) is a DNA-binding region (homeobox). The tract at residues 272 to 301 (GTPLVAGSPIRHENAVQGSAVEVQTYQPPW) is LIM-binding domain (LID). S279 is subject to Phosphoserine. Positions 326 to 336 (ESGSLGNSSGS) are enriched in low complexity. The tract at residues 326 to 359 (ESGSLGNSSGSDVTSLSSQLPDTPNSMVPSPVET) is disordered. Positions 337 to 359 (DVTSLSSQLPDTPNSMVPSPVET) are enriched in polar residues.

In terms of assembly, interacts with LHX4.

It is found in the nucleus. In terms of biological role, transcriptional factor that defines subclasses of motoneurons that segregate into columns in the spinal cord and select distinct axon pathways. This is Insulin gene enhancer protein ISL-2 (Isl2) from Mus musculus (Mouse).